The following is a 299-amino-acid chain: Circadian clock oscillator protein KaiA (299 aa).

The psR domain, binds oxidized quinones stretch occupies residues 9-148 (SRPQIFICTL…LQLSKACRLP (140 aa)). The KaiA N-terminal domain occupies 9-179 (SRPQIFICTL…RLSQKLKERL (171 aa)). A flexible linker region spans residues 180 to 188 (GYLGVYYKR). One can recognise a KaiA C-terminal domain in the interval 189-297 (NPQQFFHKLT…CEMYRRSIPK (109 aa)).

As to quaternary structure, homodimer. The KaiABC complex composition changes during the circadian cycle to control KaiC phosphorylation. Complexes KaiC(6), KaiA(2-4):KaiC(6), KaiB(6):KaiC(6) and KaiC(6):KaiB(6):KaiA(12) are among the most important forms, many form cooperatively. KaiA and CikA bind to the same region of the KaiB(fs) form and therefore compete.

Its function is as follows. Key component of the KaiABC oscillator complex, which constitutes the main circadian regulator in cyanobacteria. Complex composition changes during the circadian cycle to control KaiC phosphorylation. KaiA stimulates KaiC autophosphorylation, while KaiB sequesters KaiA, leading to KaiC autodephosphorylation. KaiA binding to the KaiC CII domain during the subjective day yields KaiA(2-4):KaiC(6) complexes which stimulate KaiC autophosphorylation. Phospho-Ser-431 KaiC accumulation triggers binding of KaiB during the subjective night to form the KaiB(6):KaiC(6) complex, leading to changes in the output regulators CikA and SasA. KaiB(6):KaiC(6) formation exposes a site for KaiA binding on KaiB that sequesters KaiA from KaiC's CII domain, making the KaiC(6):KaiB(6):KaiA(12) complex resulting in KaiC autodephosphorylation. Complete dephosphorylation of KaiC leads to dissociation of KaiA(2):KaiB(1), completing 1 cycle of the Kai oscillator. Binds oxidized quinones via the N-terminal PsR domain, allowing it to sense redox changes and possibly mediate clock input. This chain is Circadian clock oscillator protein KaiA, found in Acaryochloris marina (strain MBIC 11017).